Here is a 232-residue protein sequence, read N- to C-terminus: Protein FAM228B (232 aa).

This sequence belongs to the FAM228 family.

The sequence is that of Protein FAM228B (Fam228b) from Mus musculus (Mouse).